Consider the following 239-residue polypeptide: MKPFIHNDWWPVLEPEFEKPYYQELRRFLVEEYQHYRIDPDMYHIFTAFEWTPFSQVKVVILGQDPYHNPGQAHGCSFSVLPGTEIPPSLVNIYKELQDDLGVQPVQHGYLKHWADQGVLLLNSVLTVRDGIKTANTHRGHGWEQLTDSAIEKLSARPEPVIFILWGSAARSKIKLIDTQTNIVLQSPHPSPLSAYRGFFGSKPFSKTNIALTSLGETPIDWQLPQQVTISDESTSDTH.

Residue aspartate 65 is the Proton acceptor of the active site.

Belongs to the uracil-DNA glycosylase (UDG) superfamily. UNG family.

The protein resides in the cytoplasm. The catalysed reaction is Hydrolyzes single-stranded DNA or mismatched double-stranded DNA and polynucleotides, releasing free uracil.. In terms of biological role, excises uracil residues from the DNA which can arise as a result of misincorporation of dUMP residues by DNA polymerase or due to deamination of cytosine. This is Uracil-DNA glycosylase from Levilactobacillus brevis (strain ATCC 367 / BCRC 12310 / CIP 105137 / JCM 1170 / LMG 11437 / NCIMB 947 / NCTC 947) (Lactobacillus brevis).